The following is a 289-amino-acid chain: MAAETASGYIQHHLQNLTFGRLPNGDWGFAHTAEQAKEMGFWAFHVDTLGWSVLLGVVFLFIFRLAAKKATSGQPGGLQNFVEVMVEFVDTSVKDTFHGRNPLIAPLALTVFVWIFLLNLIDLVPVDYLPMLAAKITGDEHLFFRAVATTDPNATLGLSISVFALIVFYSIKVKGIGGFLGELTLHPFSSKNIVVQILLIPVNFLLEFVTLIAKPVSLALRLFGNMYAGELIFILIAVMFGSGMFLLSALGVALNWAWAVFHILIITLQAFIFMMLTIVYLSMAHEDNH.

Transmembrane regions (helical) follow at residues 43-63 (AFHVDTLGWSVLLGVVFLFIF), 104-124 (IAPLALTVFVWIFLLNLIDLV), 160-180 (ISVFALIVFYSIKVKGIGGFL), 193-213 (IVVQILLIPVNFLLEFVTLIA), 232-252 (IFILIAVMFGSGMFLLSALGV), and 259-279 (AVFHILIITLQAFIFMMLTIV).

It belongs to the ATPase A chain family. F-type ATPases have 2 components, CF(1) - the catalytic core - and CF(0) - the membrane proton channel. CF(1) has five subunits: alpha(3), beta(3), gamma(1), delta(1), epsilon(1). CF(0) has three main subunits: a(1), b(2) and c(9-12). The alpha and beta chains form an alternating ring which encloses part of the gamma chain. CF(1) is attached to CF(0) by a central stalk formed by the gamma and epsilon chains, while a peripheral stalk is formed by the delta and b chains.

Its subcellular location is the cell inner membrane. In terms of biological role, key component of the proton channel; it plays a direct role in the translocation of protons across the membrane. The protein is ATP synthase subunit a of Pseudomonas paraeruginosa (strain DSM 24068 / PA7) (Pseudomonas aeruginosa (strain PA7)).